We begin with the raw amino-acid sequence, 983 residues long: UPF0746 protein DDB_G0280809 (983 aa).

Residues 1 to 21 are compositionally biased toward basic and acidic residues; it reads MISNKRKEIDTINEHHEKNND. Residues 1–26 are disordered; sequence MISNKRKEIDTINEHHEKNNDDSDGI. Positions 42–76 constitute an SAP domain; it reads SGSTNYRELQIIAKSLGLASNGKKQLVYNRIEGYF. A disordered region spans residues 391 to 413; the sequence is HTTPTSTSTSTSTSTSTYTSTST. Over residues 392 to 413 the composition is skewed to low complexity; that stretch reads TTPTSTSTSTSTSTSTYTSTST.

The protein belongs to the UPF0746 family.

This Dictyostelium discoideum (Social amoeba) protein is UPF0746 protein DDB_G0280809.